We begin with the raw amino-acid sequence, 341 residues long: Brain-specific homeobox/POU domain protein 3 (341 aa).

The POU-IV box motif lies at 55 to 65; the sequence is RGAEALAAVDI. Residues 182 to 259 enclose the POU-specific domain; the sequence is ETETDPRELE…ILEAWLEEAE (78 aa). Residues 277-336 constitute a DNA-binding region (homeobox); it reads KKRKRTSIAAPEKRSLEAYFAVQPRPSSEKIAAIAEKLDLKKNVVRVWFCNQRQKQKRMK.

Belongs to the POU transcription factor family. Class-4 subfamily.

The protein localises to the nucleus. Its function is as follows. May play a role in specifying terminally differentiated neuronal phenotypes. This is Brain-specific homeobox/POU domain protein 3 (BRN3) from Gallus gallus (Chicken).